Consider the following 308-residue polypeptide: Tyramine--L-glutamate ligase (308 aa).

Residues 89–291 (KSLLKSENID…LAELLIKNAN (203 aa)) form the ATP-grasp domain. Residue 115–192 (TKIIESYPVK…QEFIDGENLS (78 aa)) participates in ATP binding. Aspartate 252, glutamate 264, and asparagine 266 together coordinate Mg(2+). The Mn(2+) site is built by aspartate 252, glutamate 264, and asparagine 266.

Mg(2+) serves as cofactor. Requires Mn(2+) as cofactor.

It catalyses the reaction tyramine + L-glutamate + ATP = gamma-L-glutamyltyramine + ADP + phosphate + H(+). It functions in the pathway cofactor biosynthesis; methanofuran biosynthesis. Functionally, catalyzes the formation of an amide bond between tyramine and the gamma carboxy group of L-glutamate. The enzyme also accepts phenylethylamine in vitro. In Methanocaldococcus jannaschii (strain ATCC 43067 / DSM 2661 / JAL-1 / JCM 10045 / NBRC 100440) (Methanococcus jannaschii), this protein is Tyramine--L-glutamate ligase (mfnD).